A 269-amino-acid chain; its full sequence is Tryptophan synthase alpha chain (269 aa).

Catalysis depends on proton acceptor residues Glu50 and Asp61.

The protein belongs to the TrpA family. As to quaternary structure, tetramer of two alpha and two beta chains.

The catalysed reaction is (1S,2R)-1-C-(indol-3-yl)glycerol 3-phosphate + L-serine = D-glyceraldehyde 3-phosphate + L-tryptophan + H2O. It functions in the pathway amino-acid biosynthesis; L-tryptophan biosynthesis; L-tryptophan from chorismate: step 5/5. Functionally, the alpha subunit is responsible for the aldol cleavage of indoleglycerol phosphate to indole and glyceraldehyde 3-phosphate. This chain is Tryptophan synthase alpha chain, found in Francisella tularensis subsp. tularensis (strain FSC 198).